The sequence spans 182 residues: uncharacterized protein (182 aa).

A helical membrane pass occupies residues L17–A34. TPR repeat units lie at residues V89 to N122 and L123 to N156.

Its subcellular location is the membrane. This is an uncharacterized protein from Sinorhizobium fredii (strain NBRC 101917 / NGR234).